The sequence spans 226 residues: Transmembrane gamma-carboxyglutamic acid protein 4 (226 aa).

The first 17 residues, 1–17 (MFTLLVLLSQLPTVTLG), serve as a signal peptide directing secretion. Residues 18–49 (FPHCARGPKASKHAGEEVFTSKEEANFFIHRR) constitute a propeptide that is removed on maturation. Residues 50-113 (LLYNRFDLEL…KSDGNREKID (64 aa)) lie on the Extracellular side of the membrane. The region spanning 52 to 98 (YNRFDLELFTPGNLERECNEELCNYEEAREIFVDEDKTIAFWQEYSA) is the Gla domain. A disulfide bridge connects residues Cys-69 and Cys-74. A 4-carboxyglutamate modification is found at Glu-72. A helical membrane pass occupies residues 114–134 (VMGLLTGLIAAGVFLVIFGLL). At 135 to 226 (GYYLCITKCN…FKKSMSLPSH (92 aa)) the chain is on the cytoplasmic side. Position 163 is a phosphoserine (Ser-163). Positions 186-189 (LPSY) match the LPXY motif; mediates binding to WW domain-containing proteins motif. The PPXY motif; mediates binding to WW domain-containing proteins signature appears at 204–207 (PPPY).

Belongs to the commissureless family. As to quaternary structure, interacts (via cytoplasmic domain) with WW domain-containing proteins MAGI1, MAGI3, NEDD4, NEDD4L, WWTR1/TAZ and YAP1. Post-translationally, gamma-carboxyglutamate residues are formed by vitamin K dependent carboxylation. These residues are essential for the binding of calcium. As to expression, widely expressed with highest levels in kidney.

The protein localises to the endoplasmic reticulum-Golgi intermediate compartment membrane. It is found in the cell membrane. In terms of biological role, may control axon guidance across the CNS. Prevents the delivery of ROBO1 at the cell surface and down-regulates its expression. The protein is Transmembrane gamma-carboxyglutamic acid protein 4 of Homo sapiens (Human).